We begin with the raw amino-acid sequence, 328 residues long: D-cysteine desulfhydrase (328 aa).

The residue at position 51 (K51) is an N6-(pyridoxal phosphate)lysine.

It belongs to the ACC deaminase/D-cysteine desulfhydrase family. In terms of assembly, homodimer. Pyridoxal 5'-phosphate serves as cofactor.

It carries out the reaction D-cysteine + H2O = hydrogen sulfide + pyruvate + NH4(+) + H(+). Catalyzes the alpha,beta-elimination reaction of D-cysteine and of several D-cysteine derivatives. It could be a defense mechanism against D-cysteine. This Salmonella paratyphi C (strain RKS4594) protein is D-cysteine desulfhydrase.